Reading from the N-terminus, the 285-residue chain is Thrombin-like enzyme TLBm (285 aa).

In terms of domain architecture, Peptidase S1 spans 1 to 273 (VIGGDECNIN…HLDWSQSVIA (273 aa)). Intrachain disulfides connect Cys-7-Cys-181, Cys-30-Cys-46, Cys-94-Cys-284, Cys-156-Cys-234, Cys-192-Cys-209, and Cys-224-Cys-249. Active-site charge relay system residues include His-45 and Asp-113. Ser-228 acts as the Charge relay system in catalysis.

Belongs to the peptidase S1 family. Snake venom subfamily. As to quaternary structure, monomer. In terms of processing, homologous thrombin-like enzymes are N-glycosylated. This enzyme does not contain the consensus glycosylation sites, suggesting it is not glycosylated. In terms of tissue distribution, expressed by the venom gland.

Its subcellular location is the secreted. Its activity is regulated as follows. Inhibited by PMSF, disodium-EDTA, S(Dm) and soybean trypsin inhibitor (SBTI). SBTI and S(Dm) (the anti-hemorrhagic protein) acts as a non-competitive inhibitors that decrease the enzymatic activity. Its function is as follows. Thrombin-like enzyme that induces the formation of fibrin clot. Cleaves the Aalpha-chain of fibrinogen (FGA) with higher activity than the Bbeta-chain (FGB). Induces platelet aggregation in both platelet-rich plasma and in washed platelet preparations. This aggregation is strongly inhibited by preincubation of the enzyme with PMSF. The polypeptide is Thrombin-like enzyme TLBm (Bothrops marajoensis (Marajo lancehead)).